The primary structure comprises 139 residues: uncharacterized protein (139 aa).

Residues 19 to 73 (IRLRRTMLGMSQEKLGESLGITFQQIQKYEKGTNRVGASRLQNISQILNVPVSFF) enclose the HTH cro/C1-type domain. A DNA-binding region (H-T-H motif) is located at residues 30 to 49 (QEKLGESLGITFQQIQKYEK).

This is an uncharacterized protein from Rhizobium meliloti (strain 1021) (Ensifer meliloti).